We begin with the raw amino-acid sequence, 454 residues long: Guanine deaminase (454 aa).

Zn(2+) contacts are provided by histidine 82 and histidine 84. Substrate is bound by residues 84–87 (HASQ), 213–214 (RF), 240–243 (HISE), and aspartate 330. Zn(2+) is bound by residues histidine 240 and aspartate 330. Serine 453 carries the post-translational modification Phosphoserine.

Belongs to the metallo-dependent hydrolases superfamily. ATZ/TRZ family. Homodimer. Zn(2+) is required as a cofactor.

The enzyme catalyses guanine + H2O + H(+) = xanthine + NH4(+). The protein operates within purine metabolism; guanine degradation; xanthine from guanine: step 1/1. Functionally, catalyzes the hydrolytic deamination of guanine, producing xanthine and ammonia. This chain is Guanine deaminase (GDA), found in Pongo abelii (Sumatran orangutan).